Reading from the N-terminus, the 286-residue chain is Toxin zeta (286 aa).

ATP is bound at residue glycine 39–threonine 46. The disordered stretch occupies residues methionine 249–isoleucine 286. A compositionally biased stretch (pro residues) spans proline 272–isoleucine 286.

It belongs to the zeta toxin family. In the presence of the epsilon antitoxin, forms an inactive PezA(2)PezT(2) heterotetramer.

The catalysed reaction is UDP-N-acetyl-alpha-D-glucosamine + ATP = UDP-N-acetyl-alpha-D-glucosamine 3'-phosphate + ADP + H(+). Functionally, toxic component of a type II toxin-antitoxin (TA) system. Phosphorylates UDP-N-acetyl-D-glucosamine (UNAG) on the 3'-hydroxyl group of the N-acetyl-D-glucosamine moiety, yielding UNAG-3P. UNAG-3P inhibits MurA, the first committed step in cell wall synthesis, which is then blocked. Phosphorylation is inhibited by cognate epsilon antitoxin. Part of a postsegregational killing (PSK) system involved in the killing of plasmid-free cells. The zeta toxin induces programmed cell death. This Enterococcus hirae protein is Toxin zeta.